The primary structure comprises 361 residues: ATP phosphoribosyltransferase regulatory subunit (361 aa).

Belongs to the class-II aminoacyl-tRNA synthetase family. HisZ subfamily. As to quaternary structure, heteromultimer composed of HisG and HisZ subunits.

The protein resides in the cytoplasm. The protein operates within amino-acid biosynthesis; L-histidine biosynthesis; L-histidine from 5-phospho-alpha-D-ribose 1-diphosphate: step 1/9. Its function is as follows. Required for the first step of histidine biosynthesis. May allow the feedback regulation of ATP phosphoribosyltransferase activity by histidine. The polypeptide is ATP phosphoribosyltransferase regulatory subunit (Thermus thermophilus (strain ATCC 27634 / DSM 579 / HB8)).